Reading from the N-terminus, the 1139-residue chain is Protein lin-25 (1139 aa).

The Nuclear localization signal signature appears at 695–701; the sequence is IKKKKDP.

Expressed in seam cells and all six vulva precursor cells (VPC). After VPC division, expression is restricted to descendants of the VPC cell lineages P5.p, P6.p and P7.p (at protein level).

Its subcellular location is the nucleus. It localises to the cytoplasm. Its function is as follows. Participates in the inductive signaling pathway downstream of let-60 Ras and the RAF/MAP kinase cascade to regulate specification and differentiation of many cell types. Positively regulates the fate of vulval precursor cells. Required for induction of the P12 and excretory duct cell fates. In males, it is also required for proper formation of spicules. Does not function in the signaling pathway that promotes exit from pachytene. Plays a role in responses to M.nematophilum-mediated bacterial infection by promoting tail swelling and preventing constipation. This Caenorhabditis elegans protein is Protein lin-25 (lin-25).